A 372-amino-acid polypeptide reads, in one-letter code: 3-ketodihydrosphingosine reductase TSC10 (372 aa).

Val-64 is a binding site for NADP(+). 7 residues coordinate NADPH: Gly-67, Ser-69, Gly-71, Arg-92, Lys-96, Asp-123, and Leu-124. The GXSXG signature appears at 67–71 (GGSQG). Asp-123 is an NADP(+) binding site. Ser-205 functions as the Proton donor in the catalytic mechanism. The NADP(+) site is built by Tyr-219, Lys-223, and Ser-254. The active-site Proton acceptor is the Tyr-219. The active-site Lowers pKa of active site Tyr is Lys-223. The helical transmembrane segment at 321–341 (LLQIPLAIFMCIFSPVWNAFV) threads the bilayer.

Belongs to the short-chain dehydrogenases/reductases (SDR) family.

The protein localises to the endoplasmic reticulum membrane. The catalysed reaction is sphinganine + NADP(+) = 3-oxosphinganine + NADPH + H(+). The protein operates within lipid metabolism; sphingolipid metabolism. In terms of biological role, catalyzes the reduction of 3'-oxosphinganine (3-ketodihydrosphingosine/KDS) to sphinganine (dihydrosphingosine/DHS), the second step of de novo sphingolipid biosynthesis. The polypeptide is 3-ketodihydrosphingosine reductase TSC10 (TSC10) (Yarrowia lipolytica (strain CLIB 122 / E 150) (Yeast)).